Reading from the N-terminus, the 585-residue chain is Potassium-transporting ATPase potassium-binding subunit (585 aa).

12 helical membrane-spanning segments follow: residues 23-43, 85-105, 152-172, 194-214, 275-295, 307-327, 345-365, 367-387, 397-417, 444-464, 502-522, and 547-567; these read GVII…ILSF, FINL…VIMF, FVIT…SMAF, IFDL…LAGI, VEFV…GIVF, VVMF…FAGV, AIGI…STGA, NAAL…GLLL, GVLN…LMVG, LLVV…SSFV, LDGV…LIIA, and VLLI…IIVL.

It belongs to the KdpA family. The system is composed of three essential subunits: KdpA, KdpB and KdpC.

Its subcellular location is the cell membrane. Part of the high-affinity ATP-driven potassium transport (or Kdp) system, which catalyzes the hydrolysis of ATP coupled with the electrogenic transport of potassium into the cytoplasm. This subunit binds the extracellular potassium ions and delivers the ions to the membrane domain of KdpB through an intramembrane tunnel. In Thermoplasma acidophilum (strain ATCC 25905 / DSM 1728 / JCM 9062 / NBRC 15155 / AMRC-C165), this protein is Potassium-transporting ATPase potassium-binding subunit.